We begin with the raw amino-acid sequence, 867 residues long: Leucine--tRNA ligase (867 aa).

The 'HIGH' region motif lies at proline 42 to histidine 52. Residues lysine 631–serine 635 carry the 'KMSKS' region motif. Lysine 634 is an ATP binding site.

It belongs to the class-I aminoacyl-tRNA synthetase family.

The protein localises to the cytoplasm. It carries out the reaction tRNA(Leu) + L-leucine + ATP = L-leucyl-tRNA(Leu) + AMP + diphosphate. The protein is Leucine--tRNA ligase of Dichelobacter nodosus (strain VCS1703A).